Here is a 530-residue protein sequence, read N- to C-terminus: Equilibrative nucleoside transporter 4 (530 aa).

The disordered stretch occupies residues 1–21 (MGSVGSQRLEEPSVAGTPDPG). Over 1-68 (MGSVGSQRLE…DEPVPDDRYH (68 aa)) the chain is Extracellular. Residues 69-89 (AIYFAMLLAGVGFLLPYNSFI) form a helical membrane-spanning segment. Residues 90 to 101 (TDVDYLHHKYPG) are Cytoplasmic-facing. The helical transmembrane segment at 102 to 122 (TSIVFDMSLTYILVALAAVLL) threads the bilayer. Residues 123 to 139 (NNVLVERLTLHTRITAG) are Extracellular-facing. A helical membrane pass occupies residues 140–160 (YLLALGPLLFISICDVWLQLF). The Cytoplasmic segment spans residues 161–166 (SRDQAY). A helical transmembrane segment spans residues 167 to 187 (AINLAAVGTVAFGCTVQQSSF). The Extracellular segment spans residues 188-231 (YGYTGMLPKRYTQGVMTGESTAGVMISLSRILTKLLLPDERAST). A helical transmembrane segment spans residues 232–252 (LIFFLVSVALELLCFLLHLLV). Topologically, residues 253 to 351 (RRSRFVLFYT…LLLHRYVVAR (99 aa)) are cytoplasmic. A helical transmembrane segment spans residues 352 to 372 (VIWADMLSIAVTYFITLCLFP). Over 373 to 381 (GLESEIRHC) the chain is Extracellular. The helical transmembrane segment at 382–402 (ILGEWLPILIMAVFNLSDFVG) threads the bilayer. The Cytoplasmic segment spans residues 403–416 (KILAALPVDWRGTH). Residues 417–437 (LLACSCLRVVFIPLFILCVYP) form a helical membrane-spanning segment. Over 438–450 (SGMPALRHPAWPC) the chain is Extracellular. The chain crosses the membrane as a helical span at residues 451–471 (IFSLLMGISNGYFGSVPMILA). Residues 472 to 486 (AGKVSPKQRELAGNT) are Cytoplasmic-facing. Residues 487-509 (MTVSYMSGLTLGSAVAYCTYSLT) form a helical membrane-spanning segment. Residues 510 to 530 (RDAHGSCLHASTANGSILAGL) lie on the Extracellular side of the membrane. An N-linked (GlcNAc...) asparagine glycan is attached at Asn523.

The protein belongs to the SLC29A/ENT transporter (TC 2.A.57) family. N-glycosylated. In terms of tissue distribution, mainly expressed in brain and skeletal muscle. In brain, expressed in cerebellum, cerebral cortex, medulla oblongata, occipital pole, frontal and temporal lobes putamen, spinal cord, substancia nigra, hippocampus, caudate nucleus, nucleus accumbens, pons and choroid plexus. Expressed in heart, in both cardiomyocytes and vascular endothelial cells. Also expressed in adrenal gland, small intestine, pancreas, kidney, liver, bone marrow, lymph node. Located in endometrial stroma, where the expression is high in the proliferative phase, decreases during the secretory phase, and is no longer detectable in the menstrual phase.

It localises to the cell membrane. It is found in the apical cell membrane. It catalyses the reaction serotonin(out) = serotonin(in). The enzyme catalyses dopamine(out) = dopamine(in). The catalysed reaction is (R)-noradrenaline(out) = (R)-noradrenaline(in). It carries out the reaction (R)-adrenaline(out) = (R)-adrenaline(in). It catalyses the reaction histamine(out) = histamine(in). The enzyme catalyses tyramine(in) = tyramine(out). The catalysed reaction is guanidine(out) = guanidine(in). It carries out the reaction adenosine(in) = adenosine(out). With respect to regulation, activated at acidic pH. In terms of biological role, electrogenic voltage-dependent transporter that mediates the transport of a variety of endogenous bioactive amines, cationic xenobiotics and drugs. Utilizes the physiologic inside-negative membrane potential as a driving force to facilitate cellular uptake of organic cations. Functions as a Na(+)- and Cl(-)-independent bidirectional transporter. Substrate transport is pH-dependent and enhanced under acidic condition, which is most likely the result of allosteric changes in the transporter structure. Implicated in monoamine neurotransmitters uptake such as serotonin, dopamine, adrenaline/epinephrine, noradrenaline/norepinephrine, histamine and tyramine, thereby supporting a role in homeostatic regulation of aminergic neurotransmission in the central nervous system. Also responsible for the uptake of bioactive amines and drugs through the blood-cerebrospinal fluid (CSF) barrier, from the CSF into choroid plexus epithelial cells, thereby playing a significant role in the clearance of cationic neurotoxins, xenobiotics and metabolic waste in the brain. Involved in bidirectional transport of the purine nucleoside adenosine and plays a role in the regulation of extracellular adenosine concentrations in cardiac tissues, in particular during ischemia. May be involved in organic cation uptake from the tubular lumen into renal tubular cells, thereby contributing to organic cation reabsorption in the kidney. Also transports guanidine. This Homo sapiens (Human) protein is Equilibrative nucleoside transporter 4.